We begin with the raw amino-acid sequence, 351 residues long: LETM1 domain-containing protein 1 (351 aa).

The Cytoplasmic segment spans residues 1–130 (MLSGMALCRT…FRRDIIKAAP (130 aa)). The helical transmembrane segment at 131 to 151 (VVIISIPPFANYLVFVLMYFF) threads the bilayer. Residues 152 to 351 (PRQLLIRHFW…SANYLQSIKQ (200 aa)) are Mitochondrial intermembrane-facing. Positions 172 to 351 (IYHRMRVEAY…SANYLQSIKQ (180 aa)) constitute a Letm1 RBD domain.

Its subcellular location is the mitochondrion outer membrane. It localises to the nucleus. The protein localises to the mitochondrion inner membrane. In terms of biological role, may play an essential role for mitochondrial structure and function. This Xenopus tropicalis (Western clawed frog) protein is LETM1 domain-containing protein 1.